We begin with the raw amino-acid sequence, 116 residues long: uncharacterized protein (116 aa).

The segment at 1–72 (MCKHVLNAQV…SDEYCPNCDN (72 aa)) adopts a CHY-type zinc-finger fold. Residues C2, H4, C16, C17, C23, C26, H27, H33, C45, C48, C67, and C70 each contribute to the Zn(2+) site.

Its subcellular location is the cytoplasm. This is an uncharacterized protein from Schizosaccharomyces pombe (strain 972 / ATCC 24843) (Fission yeast).